The following is a 29-amino-acid chain: Phospholemman-like protein (29 aa).

The protein belongs to the FXYD family. In terms of processing, phosphorylated by protein kinase C.

It localises to the membrane. Functionally, induces a hyperpolarization-activated chloride current when expressed in Xenopus oocytes. The chain is Phospholemman-like protein from Scyliorhinus canicula (Small-spotted catshark).